A 399-amino-acid chain; its full sequence is Carbamoyl phosphate synthase arginine-specific small chain (399 aa).

Residues 187–379 (DVALVDCGVK…VERMRCYRKL (193 aa)) form the Glutamine amidotransferase type-1 domain. Catalysis depends on Cys267, which acts as the Nucleophile. Active-site residues include His352 and Glu354.

The protein belongs to the CarA family. In terms of assembly, heterodimer composed of 2 chains; the small (or glutamine) chain promotes the hydrolysis of glutamine to ammonia, which is used by the large (or ammonia) chain to synthesize carbamoyl phosphate.

The protein localises to the cytoplasm. It carries out the reaction hydrogencarbonate + L-glutamine + 2 ATP + H2O = carbamoyl phosphate + L-glutamate + 2 ADP + phosphate + 2 H(+). It catalyses the reaction L-glutamine + H2O = L-glutamate + NH4(+). It participates in amino-acid biosynthesis; L-arginine biosynthesis; carbamoyl phosphate from bicarbonate: step 1/1. Small subunit of the arginine-specific carbamoyl phosphate synthase (CPSase). CPSase catalyzes the formation of carbamoyl phosphate from the ammonia moiety of glutamine, carbonate, and phosphate donated by ATP, constituting the first step of 2 biosynthetic pathways, one leading to arginine and/or urea and the other to pyrimidine nucleotides. The small subunit (glutamine amidotransferase) binds and cleaves glutamine to supply the large subunit with the substrate ammonia. This chain is Carbamoyl phosphate synthase arginine-specific small chain (CPA1), found in Eremothecium gossypii (strain ATCC 10895 / CBS 109.51 / FGSC 9923 / NRRL Y-1056) (Yeast).